A 520-amino-acid polypeptide reads, in one-letter code: DnaJ homolog l(2)tid, mitochondrial (520 aa).

Residues 1–62 constitute a mitochondrion transit peptide; that stretch reads MMISCKKLFV…RRLHTTRDLL (62 aa). The residue at position 30 (Arg30) is an Omega-N-methylarginine. One can recognise a J domain in the interval 65–130; the sequence is DYYATLGVAK…QKRREYDTYG (66 aa). Lys106 bears the N6-acetyllysine mark. The segment at 214–292 adopts a CR-type zinc-finger fold; that stretch reads GVNKDVNVNV…CEGKGRTVQR (79 aa). The Zn(2+) site is built by Cys227, Cys230, Cys244, Cys247, Cys266, Cys269, Cys280, and Cys283. A CXXCXGXG motif; approximate repeat occupies 227–234; that stretch reads CPKCAGTK. A CXXCXGXG motif repeat occupies 244 to 251; that stretch reads CQYCNGTG. A CXXCXGXG motif; approximate repeat occupies 266–273; sequence CRYCQGTR. The CXXCXGXG motif repeat unit spans residues 280–287; sequence CSECEGKG. The interval 430–520 is disordered; it reads QIHGIANRKD…FISKIKSMFN (91 aa). Residues 446–476 are compositionally biased toward low complexity; that stretch reads AGASEEPGAGAAAKASAAAAGSGASKPGPGA. Residues 479–495 show a composition bias toward basic and acidic residues; sequence SEGKDQWTDNKKTKAKE. Positions 496–511 are enriched in gly residues; it reads GGGSGSGQGDGGGGGF.

In terms of assembly, interacts with ptc (via C-terminal cytoplasmic region); the interaction is probably direct. Interacts with hh/hedgehog; the interaction is probably mediated by the hedgehog receptor ptc. Post-translationally, appears to produce proteins of differing size. Predicted to have a molecular mass of 56 kDa (TID56) however proteins of 50 kDa, 47 kDa and 40 kDa have been identified and named TID50, TID47 and TID40. TID50 and TID40 localize to the mitochondria while TID47 localizes to the cytoplasm. TID50 is probably TID56 that has undergone mitochondrial transit peptide processing. TID40 and TID47 may be alternately processed proteins or may be isoforms resulting from alternative splicing. As to expression, ubiquitously expressed throughout embryonic development. In larvae, expression is seen in sensory organs, gopplet cells, gonads, imaginal disks, proventriculus, fat body, hematopoietic organ, midgut, Malpighian tubules and ring gland.

The protein resides in the cytoplasm. The protein localises to the cytosol. Its subcellular location is the mitochondrion. It is found in the mitochondrion outer membrane. In terms of biological role, involved in hh/hedgehog signaling. May act as a tumor suppressor in larval imaginal disks. The protein is DnaJ homolog l(2)tid, mitochondrial of Drosophila melanogaster (Fruit fly).